Here is a 127-residue protein sequence, read N- to C-terminus: Large ribosomal subunit protein eL32 (127 aa).

The segment covering 37 to 48 has biased composition (basic and acidic residues); it reads KWRKPKGTDSKM. Residues 37–65 form a disordered region; it reads KWRKPKGTDSKMRVKLKGKARSPSIGWSS.

The protein belongs to the eukaryotic ribosomal protein eL32 family.

The sequence is that of Large ribosomal subunit protein eL32 from Thermococcus sibiricus (strain DSM 12597 / MM 739).